A 56-amino-acid chain; its full sequence is Large ribosomal subunit protein eL37 (56 aa).

Zn(2+) is bound by residues Cys-19, Cys-22, Cys-34, and Cys-37. Residues 19-37 (CRRCGSVSLNVHTKQCTSC) form a C4-type zinc finger.

This sequence belongs to the eukaryotic ribosomal protein eL37 family. Zn(2+) is required as a cofactor.

Its function is as follows. Binds to the 23S rRNA. This Methanosarcina mazei (strain ATCC BAA-159 / DSM 3647 / Goe1 / Go1 / JCM 11833 / OCM 88) (Methanosarcina frisia) protein is Large ribosomal subunit protein eL37.